The following is a 142-amino-acid chain: Hemoglobin subunit alpha (142 aa).

Positions 2–142 (VLSPADKSNV…VSTVLTSKYR (141 aa)) constitute a Globin domain. At Ser4 the chain carries Phosphoserine. N6-succinyllysine is present on residues Lys8 and Lys12. Lys17 bears the N6-acetyllysine; alternate mark. Lys17 carries the post-translational modification N6-succinyllysine; alternate. Tyr25 is modified (phosphotyrosine). Position 36 is a phosphoserine (Ser36). Lys41 is subject to N6-succinyllysine. Phosphoserine is present on Ser50. Residue His59 coordinates O2. His88 is a binding site for heme b. Ser103 carries the phosphoserine modification. Thr109 is modified (phosphothreonine). Phosphoserine is present on residues Ser125 and Ser132. Thr135 and Thr138 each carry phosphothreonine. Ser139 carries the post-translational modification Phosphoserine.

It belongs to the globin family. In terms of assembly, heterotetramer of two alpha chains and two beta chains. As to expression, red blood cells.

Its function is as follows. Involved in oxygen transport from the lung to the various peripheral tissues. In terms of biological role, hemopressin acts as an antagonist peptide of the cannabinoid receptor CNR1. Hemopressin-binding efficiently blocks cannabinoid receptor CNR1 and subsequent signaling. In Chlorocebus aethiops (Green monkey), this protein is Hemoglobin subunit alpha (HBA).